Reading from the N-terminus, the 79-residue chain is Small ribosomal subunit protein bS18 (79 aa).

It belongs to the bacterial ribosomal protein bS18 family. In terms of assembly, part of the 30S ribosomal subunit. Forms a tight heterodimer with protein bS6.

Functionally, binds as a heterodimer with protein bS6 to the central domain of the 16S rRNA, where it helps stabilize the platform of the 30S subunit. The chain is Small ribosomal subunit protein bS18 from Streptococcus pneumoniae serotype 19F (strain G54).